Here is a 317-residue protein sequence, read N- to C-terminus: Transaldolase (317 aa).

The Schiff-base intermediate with substrate role is filled by lysine 126.

This sequence belongs to the transaldolase family. Type 1 subfamily. As to quaternary structure, homodimer.

The protein resides in the cytoplasm. It carries out the reaction D-sedoheptulose 7-phosphate + D-glyceraldehyde 3-phosphate = D-erythrose 4-phosphate + beta-D-fructose 6-phosphate. Its pathway is carbohydrate degradation; pentose phosphate pathway; D-glyceraldehyde 3-phosphate and beta-D-fructose 6-phosphate from D-ribose 5-phosphate and D-xylulose 5-phosphate (non-oxidative stage): step 2/3. Its function is as follows. Transaldolase is important for the balance of metabolites in the pentose-phosphate pathway. In Burkholderia pseudomallei (strain K96243), this protein is Transaldolase.